We begin with the raw amino-acid sequence, 454 residues long: uncharacterized protein (454 aa).

The tract at residues 1-25 (MHGPTSKAISRNVRSVKRPRRAPRP) is disordered. Basic residues predominate over residues 14–23 (RSVKRPRRAP).

Its subcellular location is the cytoplasm. It localises to the nucleus. This is an uncharacterized protein from Saccharomyces cerevisiae (strain ATCC 204508 / S288c) (Baker's yeast).